The primary structure comprises 546 residues: Cysteine--tRNA ligase (546 aa).

C57 is a Zn(2+) binding site. Residues 59 to 69 carry the 'HIGH' region motif; that stretch reads ATVQSSPHIGH. Positions 211–236 are disordered; it reads PSVDATGADKYNPVDPADASPDKHDP. Residues C270, H295, and E299 each coordinate Zn(2+). A 'KMSKS' region motif is present at residues 326-330; sequence KMSKS. K329 provides a ligand contact to ATP.

It belongs to the class-I aminoacyl-tRNA synthetase family. In terms of assembly, monomer. Requires Zn(2+) as cofactor.

It is found in the cytoplasm. The enzyme catalyses tRNA(Cys) + L-cysteine + ATP = L-cysteinyl-tRNA(Cys) + AMP + diphosphate. The chain is Cysteine--tRNA ligase from Bifidobacterium longum (strain NCC 2705).